Reading from the N-terminus, the 183-residue chain is Ubiquitin-conjugating enzyme E2 6 (183 aa).

Residues Met-1 to Lys-148 form the UBC core domain. The Glycyl thioester intermediate role is filled by Cys-85. The interval Lys-148–Pro-183 is disordered. Residues Ile-152–Glu-176 are compositionally biased toward acidic residues.

Belongs to the ubiquitin-conjugating enzyme family. As to expression, expressed in roots, petals, sepals and silique walls.

The enzyme catalyses S-ubiquitinyl-[E1 ubiquitin-activating enzyme]-L-cysteine + [E2 ubiquitin-conjugating enzyme]-L-cysteine = [E1 ubiquitin-activating enzyme]-L-cysteine + S-ubiquitinyl-[E2 ubiquitin-conjugating enzyme]-L-cysteine.. It participates in protein modification; protein ubiquitination. Functionally, accepts the ubiquitin from the E1 complex and catalyzes its covalent attachment to other proteins. This is Ubiquitin-conjugating enzyme E2 6 (UBC6) from Arabidopsis thaliana (Mouse-ear cress).